The chain runs to 510 residues: NAD(P)H-quinone oxidoreductase subunit 2, chloroplastic (510 aa).

A run of 12 helical transmembrane segments spans residues 24–44 (LLLFNGSFIFPECILIFGLIL), 59–79 (WFYFISSTSLVMSITALLFRW), 99–119 (IFQFLILLCSTLCIPLSVEYI), 124–144 (MAITEFLLFVLTATLGGMFLC), 149–169 (LITIFVAPECFSLCSYLLSGY), 183–203 (YLLMGGASSSILVHGFSWLYG), 229–249 (ISIALISITVGIGFKLSPAPF), 295–315 (WHLLLEILAILSMILGNLIAI), 323–343 (MLAYSSIGQIGYVIIGIIVGD), 347–367 (GYASMITYMLFYISMNLGTFA), 395–415 (ALSSALCLLSLGGLPPLAGFF), and 418–438 (LHLFWCGWQAGLYFLVSIGLL).

The protein belongs to the complex I subunit 2 family. As to quaternary structure, NDH is composed of at least 16 different subunits, 5 of which are encoded in the nucleus.

The protein resides in the plastid. It is found in the chloroplast thylakoid membrane. The enzyme catalyses a plastoquinone + NADH + (n+1) H(+)(in) = a plastoquinol + NAD(+) + n H(+)(out). It catalyses the reaction a plastoquinone + NADPH + (n+1) H(+)(in) = a plastoquinol + NADP(+) + n H(+)(out). In terms of biological role, NDH shuttles electrons from NAD(P)H:plastoquinone, via FMN and iron-sulfur (Fe-S) centers, to quinones in the photosynthetic chain and possibly in a chloroplast respiratory chain. The immediate electron acceptor for the enzyme in this species is believed to be plastoquinone. Couples the redox reaction to proton translocation, and thus conserves the redox energy in a proton gradient. The polypeptide is NAD(P)H-quinone oxidoreductase subunit 2, chloroplastic (Allium textile (Textile onion)).